We begin with the raw amino-acid sequence, 179 residues long: Large ribosomal subunit protein uL5 (179 aa).

This sequence belongs to the universal ribosomal protein uL5 family. Part of the 50S ribosomal subunit; part of the 5S rRNA/L5/L18/L25 subcomplex. Contacts the 5S rRNA and the P site tRNA. Forms a bridge to the 30S subunit in the 70S ribosome.

Its function is as follows. This is one of the proteins that bind and probably mediate the attachment of the 5S RNA into the large ribosomal subunit, where it forms part of the central protuberance. In the 70S ribosome it contacts protein S13 of the 30S subunit (bridge B1b), connecting the 2 subunits; this bridge is implicated in subunit movement. Contacts the P site tRNA; the 5S rRNA and some of its associated proteins might help stabilize positioning of ribosome-bound tRNAs. The polypeptide is Large ribosomal subunit protein uL5 (Prochlorococcus marinus (strain MIT 9211)).